A 504-amino-acid polypeptide reads, in one-letter code: Maturase K (504 aa).

The protein belongs to the intron maturase 2 family. MatK subfamily.

It localises to the plastid. It is found in the chloroplast. In terms of biological role, usually encoded in the trnK tRNA gene intron. Probably assists in splicing its own and other chloroplast group II introns. The sequence is that of Maturase K from Fagus crenata (Japanese beech).